A 157-amino-acid polypeptide reads, in one-letter code: Secreted effector protein See1 (157 aa).

Residues 1-21 form the signal peptide; that stretch reads MLFTTFVSLLLVILCLVHVSA. Residues 124-157 are disordered; that stretch reads SYRYGDSHGNSREAEYSVADHQSASGEYKFGPTT. Residues 128 to 138 show a composition bias toward basic and acidic residues; sequence GDSHGNSREAE.

As to quaternary structure, interacts with a maize homolog of SGT1, a factor acting in cell cycle progression in yeast Saccharomyces cerevisiae and an important component of plant and human innate immunity.

It is found in the secreted. It localises to the host cytoplasm. The protein resides in the host nucleus. Functionally, effector protein involved in the induction of tumors in infected plant tissues by the fungus. Required for the reactivation of plant DNA synthesis, which is crucial for tumor progression in leaf cells. Interferes with the MAPK-triggered phosphorylation of maize SGT1 at a monocot-specific phosphorylation site, resulting in both modulation of immune responses and reactivation of DNA synthesis during leaf tumor formation. In Mycosarcoma maydis (Corn smut fungus), this protein is Secreted effector protein See1.